Here is a 442-residue protein sequence, read N- to C-terminus: MGICFSAEDQHYQFSQQQNYPKKTTPGKKAAVYLMKSDCEDVVGKVSGSGSGGGGLPLAPKNIKDLQSNPGYENVDIFTYEEMKIATKQFRPDYILGEGGFGVVYKGVIDESVRVGFKSTKVAIKELNPEGFQGDREWLAEVNYLGQLSHPNLVKLIGYCCEDDHRLLVYEYMAMGSLEKHLFRRVGCTLTWTKRMKIALDAAKGLAFLHGAERSIIYRDLKTANILLDEGYNAKLSDFGLAKDGPRGDQTHVSTRVMGTYGYAAPEYVMTGHLTSRSDVYGFGVLLLEMLLGKRAMDKSRACREHNLVEWARPLLNHNKKLLRIIDPRMDGQYGTKALMKVAGLAYQCLSQNPKGRPLMNHVVEVLETLKDDGDAQEEVMTNLHSRGKSVTLYEASSDSQGTRDGNGQRRRRPESGRSKSEAAVDTEKYVSTLSEPDTTKI.

A lipid anchor (N-myristoyl glycine) is attached at Gly-2. The S-palmitoyl cysteine moiety is linked to residue Cys-4. Residue Thr-79 is modified to Phosphothreonine. Residues 90-370 (FRPDYILGEG…NHVVEVLETL (281 aa)) enclose the Protein kinase domain. Residues 96-104 (LGEGGFGVV) and Lys-125 each bind ATP. Tyr-170 is subject to Phosphotyrosine. Asp-220 (proton acceptor) is an active-site residue. Residue Ser-254 is modified to Phosphoserine. Phosphothreonine is present on residues Thr-255 and Thr-260. Tyr-268 carries the phosphotyrosine modification. The interval 385 to 442 (HSRGKSVTLYEASSDSQGTRDGNGQRRRRPESGRSKSEAAVDTEKYVSTLSEPDTTKI) is disordered. Residues 395–406 (EASSDSQGTRDG) are compositionally biased toward polar residues. Over residues 414–429 (PESGRSKSEAAVDTEK) the composition is skewed to basic and acidic residues. The span at 430-442 (YVSTLSEPDTTKI) shows a compositional bias: polar residues.

Belongs to the protein kinase superfamily. Ser/Thr protein kinase family.

Its subcellular location is the cell membrane. It catalyses the reaction L-seryl-[protein] + ATP = O-phospho-L-seryl-[protein] + ADP + H(+). The catalysed reaction is L-threonyl-[protein] + ATP = O-phospho-L-threonyl-[protein] + ADP + H(+). In terms of biological role, may be involved in plant defense signaling. This Arabidopsis thaliana (Mouse-ear cress) protein is Probable serine/threonine-protein kinase PBL17.